The chain runs to 456 residues: MLNNAMSVVILAAGKGTRMYSDLPKVLHTLAGKAMVQHVIDAANELGAAHVHLVYGHGGDLLKQALKDDNLNWVLQAEQLGTGHAMQQAAPFFADDEDILMLYGDVPLISVETLQRLRDAKPQGGIGLLTVKLDDPTGYGRITRENGKVTGIVEHKDATDEQRQIQEINTGILIANGADMKRWLAKLTNNNAQGEYYITDIIALAYQEGREIVAVHPQRLSEVEGVNNRLQLSRLERVYQSEQAEKLLLAGVMLRDPARFDLRGTLTHGRDVEIDTNVIIEGNVTLGHRVKIGTGCVIKNSVIGDDCEISPYTVVEDAHLAAACTIGPFARLRPGAELLEGAHVGNFVEMKKARLGKGSKAGHLTYLGDAEIGDNVNIGAGTITCNYDGANKFKTIIGDDVFVGSDTQLVAPVTVGKGATIAAGTTVTRNVGENALAISRVPQTQKEGWRRPVKKK.

The pyrophosphorylase stretch occupies residues 1–229 (MLNNAMSVVI…LSEVEGVNNR (229 aa)). UDP-N-acetyl-alpha-D-glucosamine is bound by residues 11-14 (LAAG), Lys25, Gln76, 81-82 (GT), 103-105 (YGD), Gly140, Glu154, Asn169, and Asn227. Asp105 contributes to the Mg(2+) binding site. Asn227 serves as a coordination point for Mg(2+). A linker region spans residues 230 to 250 (LQLSRLERVYQSEQAEKLLLA). The N-acetyltransferase stretch occupies residues 251–456 (GVMLRDPARF…EGWRRPVKKK (206 aa)). The UDP-N-acetyl-alpha-D-glucosamine site is built by Arg333 and Lys351. The active-site Proton acceptor is His363. The UDP-N-acetyl-alpha-D-glucosamine site is built by Tyr366 and Asn377. Acetyl-CoA contacts are provided by residues Ala380, 386–387 (NY), Ser405, Ala423, and Arg440.

It in the N-terminal section; belongs to the N-acetylglucosamine-1-phosphate uridyltransferase family. This sequence in the C-terminal section; belongs to the transferase hexapeptide repeat family. Homotrimer. The cofactor is Mg(2+).

Its subcellular location is the cytoplasm. It carries out the reaction alpha-D-glucosamine 1-phosphate + acetyl-CoA = N-acetyl-alpha-D-glucosamine 1-phosphate + CoA + H(+). The catalysed reaction is N-acetyl-alpha-D-glucosamine 1-phosphate + UTP + H(+) = UDP-N-acetyl-alpha-D-glucosamine + diphosphate. Its pathway is nucleotide-sugar biosynthesis; UDP-N-acetyl-alpha-D-glucosamine biosynthesis; N-acetyl-alpha-D-glucosamine 1-phosphate from alpha-D-glucosamine 6-phosphate (route II): step 2/2. The protein operates within nucleotide-sugar biosynthesis; UDP-N-acetyl-alpha-D-glucosamine biosynthesis; UDP-N-acetyl-alpha-D-glucosamine from N-acetyl-alpha-D-glucosamine 1-phosphate: step 1/1. It participates in bacterial outer membrane biogenesis; LPS lipid A biosynthesis. In terms of biological role, catalyzes the last two sequential reactions in the de novo biosynthetic pathway for UDP-N-acetylglucosamine (UDP-GlcNAc). The C-terminal domain catalyzes the transfer of acetyl group from acetyl coenzyme A to glucosamine-1-phosphate (GlcN-1-P) to produce N-acetylglucosamine-1-phosphate (GlcNAc-1-P), which is converted into UDP-GlcNAc by the transfer of uridine 5-monophosphate (from uridine 5-triphosphate), a reaction catalyzed by the N-terminal domain. The polypeptide is Bifunctional protein GlmU (Escherichia fergusonii (strain ATCC 35469 / DSM 13698 / CCUG 18766 / IAM 14443 / JCM 21226 / LMG 7866 / NBRC 102419 / NCTC 12128 / CDC 0568-73)).